The chain runs to 92 residues: Small ribosomal subunit protein bS21A (92 aa).

Residues 25–52 (GVFREMKQRRSYEKPSERKTREKSEAIR) are compositionally biased toward basic and acidic residues. The disordered stretch occupies residues 25–92 (GVFREMKQRR…LPQTAARPAG (68 aa)).

The protein belongs to the bacterial ribosomal protein bS21 family.

The chain is Small ribosomal subunit protein bS21A from Bradyrhizobium diazoefficiens (strain JCM 10833 / BCRC 13528 / IAM 13628 / NBRC 14792 / USDA 110).